We begin with the raw amino-acid sequence, 250 residues long: N-acyl homoserine lactonase (250 aa).

Zn(2+)-binding residues include His-104, His-106, Asp-108, His-109, His-169, Asp-191, and His-235.

The protein belongs to the metallo-beta-lactamase superfamily. In terms of assembly, monomer. The cofactor is Zn(2+).

It carries out the reaction an N-acyl-L-homoserine lactone + H2O = an N-acyl-L-homoserine + H(+). With respect to regulation, completely inhibited by Cu(2+) and Ag(+). Partially inhibited by Cr(2+), Pb(2+) and Fe(2+). Mg(2+), Ca(2+), Mn(2+), Co(2+), Ni(2+), Zn(2+) and Cd(2+) have no effect on activity. The chelating agents EDTA, 2,2'bipyridine and o-phenanthroline have no effect on enzyme activity. Hydrolyzes acyl homoserine lactones with varying lengths of acyl chains, with a slight preference for substrates without 3-oxo substitution at the C3 position. Has only residual activity towards non-acyl lactones, and no activity towards non-cyclic esters. This chain is N-acyl homoserine lactonase, found in Bacillus sp.